The chain runs to 91 residues: Large ribosomal subunit protein eL34 (91 aa).

Residues 48-71 form a disordered region; that stretch reads RGRPVEMRKLPKTKKRPERPYPHL.

Belongs to the eukaryotic ribosomal protein eL34 family.

The chain is Large ribosomal subunit protein eL34 (rpl34e) from Pyrococcus abyssi (strain GE5 / Orsay).